A 363-amino-acid chain; its full sequence is Peptide chain release factor 2 (363 aa).

The residue at position 251 (Gln251) is an N5-methylglutamine.

The protein belongs to the prokaryotic/mitochondrial release factor family. Post-translationally, methylated by PrmC. Methylation increases the termination efficiency of RF2.

It is found in the cytoplasm. In terms of biological role, peptide chain release factor 2 directs the termination of translation in response to the peptide chain termination codons UGA and UAA. This is Peptide chain release factor 2 (prfB) from Helicobacter pylori (strain ATCC 700392 / 26695) (Campylobacter pylori).